The following is a 288-amino-acid chain: tRNA dimethylallyltransferase (288 aa).

17-24 is an ATP binding site; that stretch reads GPTASGKT. Residue 19-24 coordinates substrate; that stretch reads TASGKT.

Belongs to the IPP transferase family. In terms of assembly, monomer. Requires Mg(2+) as cofactor.

The catalysed reaction is adenosine(37) in tRNA + dimethylallyl diphosphate = N(6)-dimethylallyladenosine(37) in tRNA + diphosphate. Catalyzes the transfer of a dimethylallyl group onto the adenine at position 37 in tRNAs that read codons beginning with uridine, leading to the formation of N6-(dimethylallyl)adenosine (i(6)A). This chain is tRNA dimethylallyltransferase, found in Jannaschia sp. (strain CCS1).